A 159-amino-acid chain; its full sequence is Phosphopantetheine adenylyltransferase (159 aa).

T10 provides a ligand contact to substrate. ATP is bound by residues T10–F11 and H18. Residues K42, M74, and R88 each contribute to the substrate site. ATP contacts are provided by residues G89–R91, E99, and W124–S130.

This sequence belongs to the bacterial CoaD family. In terms of assembly, homohexamer. It depends on Mg(2+) as a cofactor.

The protein localises to the cytoplasm. The catalysed reaction is (R)-4'-phosphopantetheine + ATP + H(+) = 3'-dephospho-CoA + diphosphate. Its pathway is cofactor biosynthesis; coenzyme A biosynthesis; CoA from (R)-pantothenate: step 4/5. Functionally, reversibly transfers an adenylyl group from ATP to 4'-phosphopantetheine, yielding dephospho-CoA (dPCoA) and pyrophosphate. This Salmonella arizonae (strain ATCC BAA-731 / CDC346-86 / RSK2980) protein is Phosphopantetheine adenylyltransferase.